The following is an 859-amino-acid chain: Auxin response factor 2 (859 aa).

Positions 1–48 (MASSEVSMKGNRGGDNFSSSGFSDPKETRNVSVAGEGQKSNSTRSAAA) are disordered. Low complexity predominate over residues 14–23 (GDNFSSSGFS). Positions 164–266 (FCKTLTASDT…ELRVGVRRAM (103 aa)) form a DNA-binding region, TF-B3. Residues 396–407 (LAPPALSPVPMP) show a composition bias toward pro residues. Disordered regions lie at residues 396 to 442 (LAPP…LPAS), 687 to 736 (IASP…RSCT), and 829 to 859 (RSEE…AGNS). Composition is skewed to polar residues over residues 416–426 (IAPSSPDSSML) and 695–704 (LSDQSKGSKS). Residues 733-817 (RSCTKVHKQG…RKIFIYTKEE (85 aa)) enclose the PB1 domain. Positions 847–859 (SASNPSLSSAGNS) are enriched in polar residues.

Belongs to the ARF family. Homodimers and heterodimers. Interacts with ARF1. As to expression, expressed in the whole plant.

The protein resides in the nucleus. In terms of biological role, auxin response factors (ARFs) are transcriptional factors that bind specifically to the DNA sequence 5'-TGTCTC-3' found in the auxin-responsive promoter elements (AuxREs). Could act as transcriptional activator or repressor. Formation of heterodimers with Aux/IAA proteins may alter their ability to modulate early auxin response genes expression. Promotes flowering, stamen development, floral organ abscission and fruit dehiscence. Functions independently of ethylene and cytokinin response pathways. May act as a repressor of cell division and organ growth. This is Auxin response factor 2 (ARF2) from Arabidopsis thaliana (Mouse-ear cress).